The primary structure comprises 167 residues: Dimethylamine corrinoid protein 3 (167 aa).

Positions 1–44 constitute a B12-binding N-terminal domain; sequence MNEVGVRFERGKLFLPHVMMAADAMTAGVNALKDLMPEGSASSK. In terms of domain architecture, B12-binding spans 45 to 167; that stretch reads MGVIVNGTVE…AVTKAKELLA (123 aa). His58 contacts methylcob(III)alamin.

This sequence belongs to the methylamine corrinoid protein family.

The protein operates within one-carbon metabolism; methanogenesis from dimethylamine. In terms of biological role, acts as a methyl group carrier between MtbB and MtbA. This Methanosarcina mazei (strain ATCC BAA-159 / DSM 3647 / Goe1 / Go1 / JCM 11833 / OCM 88) (Methanosarcina frisia) protein is Dimethylamine corrinoid protein 3 (mtbC3).